The chain runs to 170 residues: Small ribosomal subunit protein uS9 (170 aa).

It belongs to the universal ribosomal protein uS9 family.

This chain is Small ribosomal subunit protein uS9, found in Rhodococcus opacus (strain B4).